A 189-amino-acid chain; its full sequence is Potassium-transporting ATPase KdpC subunit (189 aa).

A helical membrane pass occupies residues isoleucine 10–alanine 30.

The protein belongs to the KdpC family. The system is composed of three essential subunits: KdpA, KdpB and KdpC.

It localises to the cell inner membrane. Part of the high-affinity ATP-driven potassium transport (or Kdp) system, which catalyzes the hydrolysis of ATP coupled with the electrogenic transport of potassium into the cytoplasm. This subunit acts as a catalytic chaperone that increases the ATP-binding affinity of the ATP-hydrolyzing subunit KdpB by the formation of a transient KdpB/KdpC/ATP ternary complex. This chain is Potassium-transporting ATPase KdpC subunit, found in Bacteroides thetaiotaomicron (strain ATCC 29148 / DSM 2079 / JCM 5827 / CCUG 10774 / NCTC 10582 / VPI-5482 / E50).